The sequence spans 148 residues: Lysozyme C (148 aa).

Positions 1-18 (MKALIILGLVLLSVTVQG) are cleaved as a signal peptide. The region spanning 19 to 148 (KIFERCELAR…VSQYVEGCGV (130 aa)) is the C-type lysozyme domain. Cystine bridges form between cysteine 24-cysteine 146, cysteine 48-cysteine 134, cysteine 83-cysteine 99, and cysteine 95-cysteine 113. Active-site residues include glutamate 53 and aspartate 71.

It belongs to the glycosyl hydrolase 22 family. In terms of assembly, monomer.

It carries out the reaction Hydrolysis of (1-&gt;4)-beta-linkages between N-acetylmuramic acid and N-acetyl-D-glucosamine residues in a peptidoglycan and between N-acetyl-D-glucosamine residues in chitodextrins.. Lysozymes have primarily a bacteriolytic function; those in tissues and body fluids are associated with the monocyte-macrophage system and enhance the activity of immunoagents. The polypeptide is Lysozyme C (LYZ) (Colobus angolensis (Angolan colobus)).